Here is a 214-residue protein sequence, read N- to C-terminus: Probable GTP-binding protein EngB (214 aa).

One can recognise an EngB-type G domain in the interval 22 to 194 (HLPEIAFAGR…WARIDALLEP (173 aa)). Residues 30-37 (GRSNVGKS), 57-61 (GRTQL), 75-78 (DLPG), 142-145 (TKCD), and 173-175 (FSA) each bind GTP. Residues serine 37 and threonine 59 each contribute to the Mg(2+) site. Positions 195 to 214 (TAAETPGIPEEPAPPGPVND) are disordered. The span at 203-214 (PEEPAPPGPVND) shows a compositional bias: pro residues.

It belongs to the TRAFAC class TrmE-Era-EngA-EngB-Septin-like GTPase superfamily. EngB GTPase family. Mg(2+) serves as cofactor.

Necessary for normal cell division and for the maintenance of normal septation. This Geobacter sp. (strain M21) protein is Probable GTP-binding protein EngB.